The following is a 795-amino-acid chain: Phenylalanine--tRNA ligase beta subunit (795 aa).

One can recognise a tRNA-binding domain in the interval 39–148 (AGTFNGVVVG…LDAPIGTDLR (110 aa)). Residues 401–476 (PKVNTVQLRR…RIYGYNSIPN (76 aa)) enclose the B5 domain. Residues Asp454, Asp460, Glu463, and Glu464 each coordinate Mg(2+). Residues 701 to 794 (SKFPANRRDL…VKQRFNAELR (94 aa)) enclose the FDX-ACB domain.

It belongs to the phenylalanyl-tRNA synthetase beta subunit family. Type 1 subfamily. In terms of assembly, tetramer of two alpha and two beta subunits. The cofactor is Mg(2+).

The protein localises to the cytoplasm. It carries out the reaction tRNA(Phe) + L-phenylalanine + ATP = L-phenylalanyl-tRNA(Phe) + AMP + diphosphate + H(+). This is Phenylalanine--tRNA ligase beta subunit from Haemophilus influenzae (strain 86-028NP).